Reading from the N-terminus, the 174-residue chain is ATP synthase subunit delta, sodium ion specific (174 aa).

The protein belongs to the ATPase delta chain family. As to quaternary structure, F-type ATPases have 2 components, F(1) - the catalytic core - and F(0) - the membrane proton channel. F(1) has five subunits: alpha(3), beta(3), gamma(1), delta(1), epsilon(1). F(0) has three main subunits: a(1), b(2) and c(10-14). The alpha and beta chains form an alternating ring which encloses part of the gamma chain. F(1) is attached to F(0) by a central stalk formed by the gamma and epsilon chains, while a peripheral stalk is formed by the delta and b chains.

The protein localises to the cell inner membrane. Functionally, f(1)F(0) ATP synthase produces ATP from ADP in the presence of a proton or sodium gradient. F-type ATPases consist of two structural domains, F(1) containing the extramembraneous catalytic core and F(0) containing the membrane proton channel, linked together by a central stalk and a peripheral stalk. During catalysis, ATP synthesis in the catalytic domain of F(1) is coupled via a rotary mechanism of the central stalk subunits to proton translocation. In terms of biological role, this protein is part of the stalk that links CF(0) to CF(1). It either transmits conformational changes from CF(0) to CF(1) or is implicated in proton conduction. The polypeptide is ATP synthase subunit delta, sodium ion specific (Propionigenium modestum).